The following is a 598-amino-acid chain: Elongation factor 4 (598 aa).

The tr-type G domain maps to 4-185 (KNIRNFSIIA…TIITKIPAPK (182 aa)). GTP-binding positions include 16–21 (DHGKST) and 132–135 (NKID).

The protein belongs to the TRAFAC class translation factor GTPase superfamily. Classic translation factor GTPase family. LepA subfamily.

Its subcellular location is the cell inner membrane. It carries out the reaction GTP + H2O = GDP + phosphate + H(+). Required for accurate and efficient protein synthesis under certain stress conditions. May act as a fidelity factor of the translation reaction, by catalyzing a one-codon backward translocation of tRNAs on improperly translocated ribosomes. Back-translocation proceeds from a post-translocation (POST) complex to a pre-translocation (PRE) complex, thus giving elongation factor G a second chance to translocate the tRNAs correctly. Binds to ribosomes in a GTP-dependent manner. The polypeptide is Elongation factor 4 (Campylobacter jejuni subsp. jejuni serotype O:2 (strain ATCC 700819 / NCTC 11168)).